The sequence spans 93 residues: UPF0175 protein AF_0100 (93 aa).

Belongs to the UPF0175 family.

The chain is UPF0175 protein AF_0100 from Archaeoglobus fulgidus (strain ATCC 49558 / DSM 4304 / JCM 9628 / NBRC 100126 / VC-16).